Reading from the N-terminus, the 155-residue chain is Probable ribosome biogenesis protein RLP24 (155 aa).

This sequence belongs to the eukaryotic ribosomal protein eL24 family.

This chain is Probable ribosome biogenesis protein RLP24 (RPL24), found in Encephalitozoon cuniculi (strain GB-M1) (Microsporidian parasite).